The chain runs to 324 residues: Annexin A10 (324 aa).

Annexin repeat units follow at residues 17-88 (FNPM…GLMY), 89-160 (PPPS…NLVQ), 171-243 (AMAA…AIVR), and 247-318 (DKPS…AICA).

Belongs to the annexin family.

This is Annexin A10 (Anxa10) from Mus musculus (Mouse).